The chain runs to 386 residues: Mannitol-1-phosphate 5-dehydrogenase (386 aa).

Position 4 to 15 (4 to 15 (ALHFGAGNIGRG)) interacts with NAD(+).

It belongs to the mannitol dehydrogenase family.

The catalysed reaction is D-mannitol 1-phosphate + NAD(+) = beta-D-fructose 6-phosphate + NADH + H(+). This Caldanaerobacter subterraneus subsp. tengcongensis (strain DSM 15242 / JCM 11007 / NBRC 100824 / MB4) (Thermoanaerobacter tengcongensis) protein is Mannitol-1-phosphate 5-dehydrogenase.